A 372-amino-acid chain; its full sequence is Cytochrome b (372 aa).

The next 4 helical transmembrane spans lie at 25–45, 69–90, 105–125, and 170–190; these read FGSM…FLAI, WIMQ…YIHI, WLSG…GYVL, and FFAL…IHII. Heme b-binding residues include H75 and H89. Positions 174 and 188 each coordinate heme b. Residue H193 coordinates a ubiquinone. 4 consecutive transmembrane segments (helical) span residues 218–238, 280–300, 312–332, and 339–358; these read YKDM…LSFS, LGGA…PFTH, LSQI…WTAS, and FISI…ITIP.

This sequence belongs to the cytochrome b family. In terms of assembly, the cytochrome bc1 complex contains 3 respiratory subunits (MT-CYB, CYC1 and UQCRFS1), 2 core proteins (UQCRC1 and UQCRC2) and probably 6 low-molecular weight proteins. Requires heme b as cofactor.

The protein resides in the mitochondrion inner membrane. Component of the ubiquinol-cytochrome c reductase complex (complex III or cytochrome b-c1 complex) that is part of the mitochondrial respiratory chain. The b-c1 complex mediates electron transfer from ubiquinol to cytochrome c. Contributes to the generation of a proton gradient across the mitochondrial membrane that is then used for ATP synthesis. This chain is Cytochrome b (MT-CYB), found in Naja annulata annulata (Banded water cobra).